The chain runs to 137 residues: UPF0148 protein MJ0890 (137 aa).

It belongs to the UPF0148 family.

The protein is UPF0148 protein MJ0890 of Methanocaldococcus jannaschii (strain ATCC 43067 / DSM 2661 / JAL-1 / JCM 10045 / NBRC 100440) (Methanococcus jannaschii).